The primary structure comprises 274 residues: Diaminopimelate epimerase (274 aa).

Residues asparagine 11, glutamine 44, and asparagine 64 each coordinate substrate. Catalysis depends on cysteine 73, which acts as the Proton donor. Substrate is bound by residues glycine 74–asparagine 75, asparagine 157, asparagine 190, and glutamate 208–arginine 209. Cysteine 217 serves as the catalytic Proton acceptor. Position 218–219 (glycine 218–serine 219) interacts with substrate.

This sequence belongs to the diaminopimelate epimerase family. In terms of assembly, homodimer.

It localises to the cytoplasm. The catalysed reaction is (2S,6S)-2,6-diaminopimelate = meso-2,6-diaminopimelate. Its pathway is amino-acid biosynthesis; L-lysine biosynthesis via DAP pathway; DL-2,6-diaminopimelate from LL-2,6-diaminopimelate: step 1/1. Functionally, catalyzes the stereoinversion of LL-2,6-diaminopimelate (L,L-DAP) to meso-diaminopimelate (meso-DAP), a precursor of L-lysine and an essential component of the bacterial peptidoglycan. The protein is Diaminopimelate epimerase of Escherichia coli O127:H6 (strain E2348/69 / EPEC).